Consider the following 664-residue polypeptide: Cytoskeleton-associated protein 2 (664 aa).

Residues 1–38 are disordered; the sequence is MAESRKRFLGRAARNPLPVTRDLQLPPTRRDQPAFREQ. The span at 28–38 shows a compositional bias: basic and acidic residues; it reads TRRDQPAFREQ. The interval 160–319 is association with alpha- and beta-tubulin; sequence PKQDSNVSKK…ASKDAARTDS (160 aa). Residue Ser186 is modified to Phosphoserine. 4 disordered regions span residues 254–273, 283–328, 366–393, and 512–545; these read IRSL…SRPL, LDKE…MVKP, GKGK…NPVG, and AHAT…KVEV. Residues 300-309 are compositionally biased toward polar residues; sequence GSSQAPSRSI. The span at 366 to 375 shows a compositional bias: basic residues; it reads GKGKGLKRPP. Residues 533 to 545 show a composition bias toward basic and acidic residues; the sequence is PGEENEHHGKVEV. The residue at position 561 (Thr561) is a Phosphothreonine. The residue at position 577 (Ser577) is a Phosphoserine. Thr579 bears the Phosphothreonine mark. At Ser584 the chain carries Phosphoserine.

The protein belongs to the CKAP2 family. In terms of assembly, associates with alpha- and beta-tubulins.

It is found in the cytoplasm. Its subcellular location is the cytoskeleton. The protein localises to the spindle. It localises to the spindle pole. Its function is as follows. Possesses microtubule stabilizing properties. Involved in regulating aneuploidy, cell cycling, and cell death in a p53-dependent manner. The sequence is that of Cytoskeleton-associated protein 2 from Mus musculus (Mouse).